Reading from the N-terminus, the 161-residue chain is MLRVTSYHPAGTPGDEPSGYVTLAHDQRHLRRKLLHLQNDEMVMLDLKEAVLFAHGDLLVVENGDLIEVRAADEKLFEIKAKDRLHLIELAWHLGNRHLAAQIEEERILILRDHVIRAMLEGLGATVRDVEEPFQPARGAYHAHGGHSHDHGQGHHHHDHG.

The interval 138–161 (RGAYHAHGGHSHDHGQGHHHHDHG) is disordered.

The protein belongs to the UreE family.

The protein resides in the cytoplasm. In terms of biological role, involved in urease metallocenter assembly. Binds nickel. Probably functions as a nickel donor during metallocenter assembly. This Agrobacterium fabrum (strain C58 / ATCC 33970) (Agrobacterium tumefaciens (strain C58)) protein is Urease accessory protein UreE.